A 182-amino-acid polypeptide reads, in one-letter code: Ferritin heavy chain (182 aa).

Met1 is subject to N-acetylmethionine. Thr2 is modified (N-acetylthreonine; in Ferritin heavy chain, N-terminally processed). The Ferritin-like diiron domain maps to 11–160; sequence QNYHQDSEAA…DHVTNLRRMG (150 aa). Fe cation-binding residues include Glu28, Glu63, His66, Glu108, and Gln142.

The protein belongs to the ferritin family. In terms of assembly, oligomer of 24 subunits. There are two types of subunits: L (light) chain and H (heavy) chain. The major chain can be light or heavy, depending on the species and tissue type. The functional molecule forms a roughly spherical shell with a diameter of 12 nm and contains a central cavity into which the insoluble mineral iron core is deposited. Interacts with NCOA4; NCOA4 promotes targeting of the iron-binding ferritin complex to autolysosomes following starvation or iron depletion.

The protein resides in the cytoplasm. It is found in the lysosome. The protein localises to the cytoplasmic vesicle. It localises to the autophagosome. The catalysed reaction is 4 Fe(2+) + O2 + 4 H(+) = 4 Fe(3+) + 2 H2O. Functionally, stores iron in a soluble, non-toxic, readily available form. Important for iron homeostasis. Has ferroxidase activity. Iron is taken up in the ferrous form and deposited as ferric hydroxides after oxidation. Also plays a role in delivery of iron to cells. Mediates iron uptake in capsule cells of the developing kidney. Delivery to lysosomes is mediated by the cargo receptor NCOA4 for autophagic degradation and release of iron. The polypeptide is Ferritin heavy chain (FTH1) (Equus caballus (Horse)).